Here is a 92-residue protein sequence, read N- to C-terminus: UPF0223 protein SSP1692 (92 aa).

Belongs to the UPF0223 family.

The chain is UPF0223 protein SSP1692 from Staphylococcus saprophyticus subsp. saprophyticus (strain ATCC 15305 / DSM 20229 / NCIMB 8711 / NCTC 7292 / S-41).